A 345-amino-acid polypeptide reads, in one-letter code: MAANYWESTQRKHWLFTKDELAAMRAKLEAEEPNLVASFPLPQLRHLNIYFNQQINRLGKRMGLRQQALATAQVYIKRFYTKVEIRRTNPHHVLVTALYLACKMEECPQHIRLMANEARGFWPTDFQSQTEVARIGECEFYLISEMSSHLIVHSPYRTLTSLQGELGLAQEDVNLAWSVINDHYMTDLPLLHPPHVIALTAILLALVLRQDPSGRLPGTAASASGLVAASAALAQAQAQAQARAAMMAGGGQTVPGLTPQSSSGLQAMLPPQSPAGEGPAEGNKNPRMAKVHRFAAWLSDSNIDIEAMVDCTQELISFYECHEQYNDKNTREQINRFVKARGLDK.

In terms of domain architecture, Cyclin N-terminal spans 53–144 (QQINRLGKRM…IGECEFYLIS (92 aa)). Positions 256–285 (GLTPQSSSGLQAMLPPQSPAGEGPAEGNKN) are disordered.

The protein belongs to the cyclin family. Cyclin C subfamily. Component of the srb8-11 complex, a regulatory module of the Mediator complex.

The protein resides in the nucleus. Its function is as follows. Component of the srb8-11 complex. The srb8-11 complex is a regulatory module of the Mediator complex which is itself involved in regulation of basal and activated RNA polymerase II-dependent transcription. The srb8-11 complex may be involved in the transcriptional repression of a subset of genes regulated by Mediator. It may inhibit the association of the Mediator complex with RNA polymerase II to form the holoenzyme complex. The srb8-11 complex phosphorylates the C-terminal domain (CTD) of the largest subunit of RNA polymerase II. This Neurospora crassa (strain ATCC 24698 / 74-OR23-1A / CBS 708.71 / DSM 1257 / FGSC 987) protein is RNA polymerase II holoenzyme cyclin-like subunit (ssn8).